A 132-amino-acid chain; its full sequence is Large ribosomal subunit protein uL14 (132 aa).

The protein belongs to the universal ribosomal protein uL14 family. As to quaternary structure, part of the 50S ribosomal subunit. Forms a cluster with proteins L3 and L24e, part of which may contact the 16S rRNA in 2 intersubunit bridges.

Binds to 23S rRNA. Forms part of two intersubunit bridges in the 70S ribosome. The protein is Large ribosomal subunit protein uL14 of Halobacterium salinarum (strain ATCC 29341 / DSM 671 / R1).